The sequence spans 283 residues: Acetylglutamate kinase (283 aa).

Residues 63-64 (GG), arginine 85, and asparagine 178 each bind substrate.

It belongs to the acetylglutamate kinase family. ArgB subfamily.

It is found in the cytoplasm. It catalyses the reaction N-acetyl-L-glutamate + ATP = N-acetyl-L-glutamyl 5-phosphate + ADP. It functions in the pathway amino-acid biosynthesis; L-arginine biosynthesis; N(2)-acetyl-L-ornithine from L-glutamate: step 2/4. Its function is as follows. Catalyzes the ATP-dependent phosphorylation of N-acetyl-L-glutamate. The protein is Acetylglutamate kinase of Prochlorococcus marinus (strain MIT 9312).